Reading from the N-terminus, the 180-residue chain is Negative modulator of initiation of replication (180 aa).

The interval 115–119 (RTRVY) is interaction with DNA.

The protein belongs to the SeqA family. In terms of assembly, homodimer. Polymerizes to form helical filaments.

The protein resides in the cytoplasm. Functionally, negative regulator of replication initiation, which contributes to regulation of DNA replication and ensures that replication initiation occurs exactly once per chromosome per cell cycle. Binds to pairs of hemimethylated GATC sequences in the oriC region, thus preventing assembly of replication proteins and re-initiation at newly replicated origins. Repression is relieved when the region becomes fully methylated. In Aliivibrio fischeri (strain ATCC 700601 / ES114) (Vibrio fischeri), this protein is Negative modulator of initiation of replication.